A 223-amino-acid polypeptide reads, in one-letter code: PRA1 family protein B5 (223 aa).

Transmembrane regions (helical) follow at residues 83 to 103 (SSYF…FSLL), 105 to 125 (HPFS…LYLF), 146 to 166 (GGLI…SVLI), 170 to 190 (MIGI…DLFL), and 196 to 216 (AASG…APSA).

It belongs to the PRA1 family. As to quaternary structure, interacts with PRA1B1, PRA1B2, PRA1B3, PRA1B4, PRA1B6 and PRA1E. As to expression, expressed in roots, lateral roots, lateral root caps, columella cells, leaves, and shoot apex.

Its subcellular location is the endosome membrane. In terms of biological role, may be involved in both secretory and endocytic intracellular trafficking in the endosomal/prevacuolar compartments. The sequence is that of PRA1 family protein B5 (PRA1B5) from Arabidopsis thaliana (Mouse-ear cress).